We begin with the raw amino-acid sequence, 259 residues long: Gasdermin bGSDM (259 aa).

A lipid anchor (S-palmitoyl cysteine) is attached at cysteine 3. 4 beta stranded membrane passes run 70-86 (FQFR…AASV), 98-116 (SGSF…IQLS), 162-179 (GIRI…DLSA), and 187-203 (AKAK…SYAF). Residues 244–259 (PFAFIGDDAFVDLPES) form a C-terminal region region.

Belongs to the bacterial gasdermin family. As to quaternary structure, monomer in solution. In terms of assembly, forms large, homooligomeric ring-shaped pores when inserted in membranes. Palmitoylation helps stabilize the inactive state; may self palmitoylate. Palmitoylation plays a significant role in pore formation.

The protein resides in the cytoplasm. It localises to the cell inner membrane. With respect to regulation, the full-length protein before cleavage is inactive: intramolecular interactions between the N-terminal domain and the C-terminal region as well as the lipid modification, mediate autoinhibition. The pyroptosis-like-inducing activity is carried by the released N-terminal domain (Gasdermin bGSDM, N-terminus). Functionally, precursor of a pore-forming protein involved in defense against bacteriophages. Expression of bGSDM and the neighboring protease gene (Ga0098714_109514) is toxic in E.coli on solid medium. Cleavage of this precursor by its dedicated protease releases the active moiety (gasdermin bGSDM, N-terminus) which inserts into membranes, forming pores and triggering cell death. Its function is as follows. Pore-forming protein that causes membrane permeabilization via a pyroptosis-like activity. Makes ring-like pores when released. The polypeptide is Gasdermin bGSDM (Bradyrhizobium tropiciagri).